We begin with the raw amino-acid sequence, 315 residues long: tRNA uridine(34) hydroxylase (315 aa).

The region spanning 136-230 is the Rhodanese domain; sequence SDPETLVIDT…YLEEIPPEES (95 aa). Catalysis depends on Cys190, which acts as the Cysteine persulfide intermediate.

It belongs to the TrhO family.

It catalyses the reaction uridine(34) in tRNA + AH2 + O2 = 5-hydroxyuridine(34) in tRNA + A + H2O. Its function is as follows. Catalyzes oxygen-dependent 5-hydroxyuridine (ho5U) modification at position 34 in tRNAs. The protein is tRNA uridine(34) hydroxylase of Sinorhizobium medicae (strain WSM419) (Ensifer medicae).